A 21-amino-acid chain; its full sequence is Hemolymph 65 kDa lectin BG04 (21 aa).

As to expression, hemolymph.

The protein localises to the secreted. Functionally, binds and precipitates antigens of the parasite Echinostoma paraensei. The polypeptide is Hemolymph 65 kDa lectin BG04 (BG04) (Biomphalaria glabrata (Bloodfluke planorb)).